A 651-amino-acid chain; its full sequence is UvrABC system protein C (651 aa).

The GIY-YIG domain maps to 21–100 (TEPGCYLMRD…IKNQQPHFNV (80 aa)). The region spanning 210–245 (DELRQLLNQQMERYAERLDFESAARIRDQLQGIDQL) is the UVR domain.

Belongs to the UvrC family. As to quaternary structure, interacts with UvrB in an incision complex.

Its subcellular location is the cytoplasm. Its function is as follows. The UvrABC repair system catalyzes the recognition and processing of DNA lesions. UvrC both incises the 5' and 3' sides of the lesion. The N-terminal half is responsible for the 3' incision and the C-terminal half is responsible for the 5' incision. The sequence is that of UvrABC system protein C from Synechococcus sp. (strain CC9311).